The sequence spans 546 residues: Arginine--tRNA ligase (546 aa).

Residues 122–132 carry the 'HIGH' region motif; the sequence is ANPTGPFTVGH.

It belongs to the class-I aminoacyl-tRNA synthetase family. As to quaternary structure, monomer.

The protein localises to the cytoplasm. The catalysed reaction is tRNA(Arg) + L-arginine + ATP = L-arginyl-tRNA(Arg) + AMP + diphosphate. The sequence is that of Arginine--tRNA ligase from Thermotoga petrophila (strain ATCC BAA-488 / DSM 13995 / JCM 10881 / RKU-1).